The following is a 141-amino-acid chain: Hemoglobin subunit alpha (141 aa).

The 141-residue stretch at 1 to 141 folds into the Globin domain; it reads VLSAADKGHV…VSTVLTSKYR (141 aa). A Phosphoserine modification is found at S3. N6-succinyllysine occurs at positions 7 and 11. The residue at position 16 (K16) is an N6-acetyllysine; alternate. K16 carries the N6-succinyllysine; alternate modification. Position 24 is a phosphotyrosine (Y24). Phosphoserine is present on S35. The residue at position 40 (K40) is an N6-succinyllysine. S49 is modified (phosphoserine). O2 is bound at residue H58. Residue H87 coordinates heme b. Phosphoserine is present on S102. A Phosphothreonine modification is found at T108. S124 is subject to Phosphoserine. T134 and T137 each carry phosphothreonine. At S138 the chain carries Phosphoserine.

This sequence belongs to the globin family. As to quaternary structure, heterotetramer of two alpha chains and two beta chains. In terms of tissue distribution, red blood cells.

Functionally, involved in oxygen transport from the lung to the various peripheral tissues. In terms of biological role, hemopressin acts as an antagonist peptide of the cannabinoid receptor CNR1. Hemopressin-binding efficiently blocks cannabinoid receptor CNR1 and subsequent signaling. The protein is Hemoglobin subunit alpha (HBA) of Macropus giganteus (Eastern gray kangaroo).